A 177-amino-acid chain; its full sequence is Probable nicotinate-nucleotide adenylyltransferase (177 aa).

Belongs to the NadD family.

The enzyme catalyses nicotinate beta-D-ribonucleotide + ATP + H(+) = deamido-NAD(+) + diphosphate. It participates in cofactor biosynthesis; NAD(+) biosynthesis; deamido-NAD(+) from nicotinate D-ribonucleotide: step 1/1. Catalyzes the reversible adenylation of nicotinate mononucleotide (NaMN) to nicotinic acid adenine dinucleotide (NaAD). The sequence is that of Probable nicotinate-nucleotide adenylyltransferase from Nitratiruptor sp. (strain SB155-2).